A 557-amino-acid chain; its full sequence is Formate--tetrahydrofolate ligase 1 (557 aa).

Position 66–73 (66–73 (TPAGEGKT)) interacts with ATP.

Belongs to the formate--tetrahydrofolate ligase family.

The enzyme catalyses (6S)-5,6,7,8-tetrahydrofolate + formate + ATP = (6R)-10-formyltetrahydrofolate + ADP + phosphate. It participates in one-carbon metabolism; tetrahydrofolate interconversion. The protein is Formate--tetrahydrofolate ligase 1 of Streptococcus sanguinis (strain SK36).